Reading from the N-terminus, the 244-residue chain is UPF0173 metal-dependent hydrolase Rcas_3617 (244 aa).

This sequence belongs to the UPF0173 family.

The sequence is that of UPF0173 metal-dependent hydrolase Rcas_3617 from Roseiflexus castenholzii (strain DSM 13941 / HLO8).